Reading from the N-terminus, the 492-residue chain is Glutamyl-tRNA(Gln) amidotransferase subunit A (492 aa).

Residues K78 and S158 each act as charge relay system in the active site. S182 acts as the Acyl-ester intermediate in catalysis.

It belongs to the amidase family. GatA subfamily. Heterotrimer of A, B and C subunits.

It carries out the reaction L-glutamyl-tRNA(Gln) + L-glutamine + ATP + H2O = L-glutaminyl-tRNA(Gln) + L-glutamate + ADP + phosphate + H(+). Allows the formation of correctly charged Gln-tRNA(Gln) through the transamidation of misacylated Glu-tRNA(Gln) in organisms which lack glutaminyl-tRNA synthetase. The reaction takes place in the presence of glutamine and ATP through an activated gamma-phospho-Glu-tRNA(Gln). The protein is Glutamyl-tRNA(Gln) amidotransferase subunit A of Zymomonas mobilis subsp. mobilis (strain ATCC 31821 / ZM4 / CP4).